A 241-amino-acid chain; its full sequence is Core protein D3 homolog (241 aa).

This sequence belongs to the chordopoxvirinae D3 family.

The protein resides in the virion. In terms of biological role, late protein which is part of a large complex required for early virion morphogenesis. This complex participates in the formation of virosomes and the incorporation of virosomal contents into nascent immature virions. The polypeptide is Core protein D3 homolog (Oryctolagus cuniculus (Rabbit)).